An 85-amino-acid polypeptide reads, in one-letter code: Large ribosomal subunit protein bL27 (85 aa).

Belongs to the bacterial ribosomal protein bL27 family.

The sequence is that of Large ribosomal subunit protein bL27 from Pseudomonas fluorescens (strain ATCC BAA-477 / NRRL B-23932 / Pf-5).